The chain runs to 336 residues: HTH-type transcriptional repressor PurR (336 aa).

In terms of domain architecture, HTH lacI-type spans 2–56 (ATIKDVAKMAGVSTTTVSHVINKTRFVAKDTEEAVLSAIKQLNYSPSAVARSLKV). A DNA-binding region (H-T-H motif) is located at residues 4 to 23 (IKDVAKMAGVSTTTVSHVIN). A DNA-binding region spans residues 48 to 56 (SAVARSLKV). Hypoxanthine contacts are provided by Y73, K188, T190, F219, and D273.

As to quaternary structure, homodimer.

Its pathway is purine metabolism; purine nucleotide biosynthesis [regulation]. Is the main repressor of the genes involved in the de novo synthesis of purine nucleotides, regulating purB, purC, purEK, purF, purHD, purL, purMN and guaBA expression. PurR is allosterically activated to bind its cognate DNA by binding the purine corepressors, hypoxanthine or guanine, thereby effecting transcription repression. The chain is HTH-type transcriptional repressor PurR from Haemophilus influenzae (strain 86-028NP).